We begin with the raw amino-acid sequence, 148 residues long: Glutamyl-tRNA(Gln) amidotransferase subunit C, mitochondrial (148 aa).

The protein belongs to the GatC family. As to quaternary structure, subunit of the heterotrimeric GatCAB amidotransferase (AdT) complex, composed of A, B and C subunits.

The protein resides in the mitochondrion. It carries out the reaction L-glutamyl-tRNA(Gln) + L-glutamine + ATP + H2O = L-glutaminyl-tRNA(Gln) + L-glutamate + ADP + phosphate + H(+). Allows the formation of correctly charged Gln-tRNA(Gln) through the transamidation of misacylated Glu-tRNA(Gln) in the mitochondria. The reaction takes place in the presence of glutamine and ATP through an activated gamma-phospho-Glu-tRNA(Gln). The sequence is that of Glutamyl-tRNA(Gln) amidotransferase subunit C, mitochondrial from Drosophila yakuba (Fruit fly).